We begin with the raw amino-acid sequence, 400 residues long: Elongation factor Tu (400 aa).

The tr-type G domain occupies 10–209 (KPHVNIGTIG…EVDNYIPTPE (200 aa)). The segment at 19-26 (GHVDHGKT) is G1. 19 to 26 (GHVDHGKT) serves as a coordination point for GTP. Thr-26 is a binding site for Mg(2+). The tract at residues 60–64 (GITIN) is G2. The G3 stretch occupies residues 81 to 84 (DCPG). GTP contacts are provided by residues 81–85 (DCPGH) and 136–139 (NKCD). A G4 region spans residues 136–139 (NKCD). A G5 region spans residues 174 to 176 (SAL).

It belongs to the TRAFAC class translation factor GTPase superfamily. Classic translation factor GTPase family. EF-Tu/EF-1A subfamily. Monomer.

Its subcellular location is the cytoplasm. The enzyme catalyses GTP + H2O = GDP + phosphate + H(+). In terms of biological role, GTP hydrolase that promotes the GTP-dependent binding of aminoacyl-tRNA to the A-site of ribosomes during protein biosynthesis. This chain is Elongation factor Tu, found in Ruminiclostridium cellulolyticum (strain ATCC 35319 / DSM 5812 / JCM 6584 / H10) (Clostridium cellulolyticum).